A 282-amino-acid chain; its full sequence is Sulfur carrier protein FdhD (282 aa).

Cys115 (cysteine persulfide intermediate) is an active-site residue.

Belongs to the FdhD family.

Its subcellular location is the cytoplasm. Required for formate dehydrogenase (FDH) activity. Acts as a sulfur carrier protein that transfers sulfur from IscS to the molybdenum cofactor prior to its insertion into FDH. The polypeptide is Sulfur carrier protein FdhD (Streptomyces avermitilis (strain ATCC 31267 / DSM 46492 / JCM 5070 / NBRC 14893 / NCIMB 12804 / NRRL 8165 / MA-4680)).